Here is a 527-residue protein sequence, read N- to C-terminus: Protein SDS24 (527 aa).

Composition is skewed to low complexity over residues 1-22 and 55-74; these read MAST…LPTS and TPPT…TPAP. The tract at residues 1–75 is disordered; that stretch reads MASTSNTFPP…PGCAATPAPL (75 aa). Serine 94 carries the post-translational modification Phosphoserine. CBS domains lie at 114–175, 198–256, 283–342, and 443–512; these read IEQN…KITV, LTPK…NARS, TSRQ…QYPL, and LNSH…GNKE. Positions 424–447 are enriched in low complexity; it reads AQSSANGATPMSKSSSSTSLNSHS. 2 disordered regions span residues 424–478 and 508–527; these read AQSS…TNTP and TGNK…SIAM. Phosphoserine is present on residues serine 458 and serine 524.

Belongs to the SDS23 family.

It is found in the cytoplasm. The protein localises to the nucleus. In terms of biological role, involved in DNA replication and cell separation during budding. The sequence is that of Protein SDS24 (SDS24) from Saccharomyces cerevisiae (strain YJM789) (Baker's yeast).